The primary structure comprises 289 residues: Nucleotide-binding protein MS1718 (289 aa).

Position 8-15 (8-15) interacts with ATP; sequence GRSGAGKS. Residue 56–59 coordinates GTP; it reads DIRN.

Belongs to the RapZ-like family.

Displays ATPase and GTPase activities. The protein is Nucleotide-binding protein MS1718 of Mannheimia succiniciproducens (strain KCTC 0769BP / MBEL55E).